A 479-amino-acid chain; its full sequence is uncharacterized protein (479 aa).

ATP-binding positions include threonine 150–lysine 158, aspartate 360, arginine 375, and lysine 462.

Belongs to the ATP-dependent AMP-binding enzyme family.

Functionally, may be involved in fatty acid metabolism. This is an uncharacterized protein from Bacillus subtilis (strain 168).